Reading from the N-terminus, the 415-residue chain is Serine hydroxymethyltransferase (415 aa).

(6S)-5,6,7,8-tetrahydrofolate contacts are provided by residues leucine 117 and 121–123 (GHL). The residue at position 225 (lysine 225) is an N6-(pyridoxal phosphate)lysine. 349-351 (SPF) is a binding site for (6S)-5,6,7,8-tetrahydrofolate.

This sequence belongs to the SHMT family. In terms of assembly, homodimer. It depends on pyridoxal 5'-phosphate as a cofactor.

The protein localises to the cytoplasm. The enzyme catalyses (6R)-5,10-methylene-5,6,7,8-tetrahydrofolate + glycine + H2O = (6S)-5,6,7,8-tetrahydrofolate + L-serine. It functions in the pathway one-carbon metabolism; tetrahydrofolate interconversion. Its pathway is amino-acid biosynthesis; glycine biosynthesis; glycine from L-serine: step 1/1. Catalyzes the reversible interconversion of serine and glycine with tetrahydrofolate (THF) serving as the one-carbon carrier. This reaction serves as the major source of one-carbon groups required for the biosynthesis of purines, thymidylate, methionine, and other important biomolecules. Also exhibits THF-independent aldolase activity toward beta-hydroxyamino acids, producing glycine and aldehydes, via a retro-aldol mechanism. The protein is Serine hydroxymethyltransferase of Nitratiruptor sp. (strain SB155-2).